Reading from the N-terminus, the 1774-residue chain is Receptor-mediated endocytosis protein 6 homolog (1774 aa).

The 240-residue stretch at 157–396 (ELLLKLLREL…EDVVAILPQQ (240 aa)) folds into the Ras-GAP domain. Disordered stretches follow at residues 444–480 (IPKQ…NNRS), 517–564 (PLAN…PAPT), 661–727 (AAHS…HHHG), 784–811 (ENTL…RNFS), 869–947 (AEID…EDSA), 983–1102 (ESSF…EEQP), 1115–1142 (QEEQ…SMEQ), and 1214–1342 (RAGA…GGRS). Composition is skewed to low complexity over residues 519–533 (ANGQ…SASN) and 540–557 (SSHS…AAPA). Over residues 674–683 (QQERDVHENE) the composition is skewed to basic and acidic residues. Positions 688–713 (DMVSANVSGRGTPNISGRDTPSSQVT) are enriched in polar residues. The span at 794-809 (RGGDRGDRGDRDRDRN) shows a compositional bias: basic and acidic residues. Residues 887 to 905 (PGSGGGAGVPEAGGGGGVV) show a composition bias toward gly residues. The segment covering 929-944 (DPDRERLRNGSERSQE) has biased composition (basic and acidic residues). The span at 1011–1027 (MRRQTSAESSISNQSLN) shows a compositional bias: polar residues. The segment covering 1038-1047 (LAKHHHHHQH) has biased composition (basic residues). A compositionally biased stretch (basic and acidic residues) spans 1048–1060 (RDRDRDRDRDRDH). A compositionally biased stretch (basic residues) spans 1061-1076 (REHHHKSAALKKKKHQ). Residues 1077–1087 (EHKEHQHRDLI) are compositionally biased toward basic and acidic residues. Positions 1091-1101 (DCSEDKDEEEQ) are enriched in acidic residues. Residues 1115-1125 (QEEQQQQQQQQ) show a composition bias toward low complexity. The segment covering 1246–1291 (SADKEQQPYRDRERERDRERDRERDRDRERDRDRDRDRDRDREHHS) has biased composition (basic and acidic residues). The segment covering 1310–1335 (SSSSKNNAIAIAAPSSINPNPSPSSA) has biased composition (low complexity). Residues 1516–1546 (RHRQQLLLRSEQLEQLEVRLRSEARSCQRCL) are a coiled coil. Positions 1635-1774 (VSRDTVLSAH…KFIKTMDYLD (140 aa)) constitute a VPS9 domain.

The protein belongs to the GAPVD1 family.

The protein localises to the membrane. In terms of biological role, acts both as a GTPase-activating protein (GAP) and a guanine nucleotide exchange factor (GEF), and participates in endocytosis. The sequence is that of Receptor-mediated endocytosis protein 6 homolog from Drosophila pseudoobscura pseudoobscura (Fruit fly).